We begin with the raw amino-acid sequence, 545 residues long: Glucose-6-phosphate isomerase (545 aa).

Catalysis depends on Glu351, which acts as the Proton donor. Catalysis depends on residues His382 and Lys510.

It belongs to the GPI family.

It is found in the cytoplasm. The enzyme catalyses alpha-D-glucose 6-phosphate = beta-D-fructose 6-phosphate. It participates in carbohydrate biosynthesis; gluconeogenesis. Its pathway is carbohydrate degradation; glycolysis; D-glyceraldehyde 3-phosphate and glycerone phosphate from D-glucose: step 2/4. Catalyzes the reversible isomerization of glucose-6-phosphate to fructose-6-phosphate. This chain is Glucose-6-phosphate isomerase, found in Shewanella baltica (strain OS155 / ATCC BAA-1091).